Reading from the N-terminus, the 263-residue chain is Endonuclease 8 (263 aa).

Catalysis depends on Pro2, which acts as the Schiff-base intermediate with DNA. Glu3 functions as the Proton donor in the catalytic mechanism. Catalysis depends on Lys53, which acts as the Proton donor; for beta-elimination activity. The DNA site is built by Gln70, Arg125, and Asn169. The FPG-type zinc finger occupies 229–263 (KVFHRDGELCERCGGIIEKTTLSSRPFYWCPGCQH). Arg253 (proton donor; for delta-elimination activity) is an active-site residue.

Belongs to the FPG family. Requires Zn(2+) as cofactor.

It catalyses the reaction 2'-deoxyribonucleotide-(2'-deoxyribose 5'-phosphate)-2'-deoxyribonucleotide-DNA = a 3'-end 2'-deoxyribonucleotide-(2,3-dehydro-2,3-deoxyribose 5'-phosphate)-DNA + a 5'-end 5'-phospho-2'-deoxyribonucleoside-DNA + H(+). Involved in base excision repair of DNA damaged by oxidation or by mutagenic agents. Acts as a DNA glycosylase that recognizes and removes damaged bases. Has a preference for oxidized pyrimidines, such as thymine glycol, 5,6-dihydrouracil and 5,6-dihydrothymine. Has AP (apurinic/apyrimidinic) lyase activity and introduces nicks in the DNA strand. Cleaves the DNA backbone by beta-delta elimination to generate a single-strand break at the site of the removed base with both 3'- and 5'-phosphates. The sequence is that of Endonuclease 8 from Escherichia coli O157:H7.